The chain runs to 61 residues: Large ribosomal subunit protein uL30 (61 aa).

This sequence belongs to the universal ribosomal protein uL30 family. As to quaternary structure, part of the 50S ribosomal subunit.

The chain is Large ribosomal subunit protein uL30 from Bordetella parapertussis (strain 12822 / ATCC BAA-587 / NCTC 13253).